Reading from the N-terminus, the 1004-residue chain is Glutamate [NMDA] receptor subunit 1 (1004 aa).

The N-terminal stretch at 1–39 (MAGTDSPAAARFVYRCLLFAPAIVVGLLLPLTLPPIAAA) is a signal peptide. At 40–585 (QRHTASDNPS…TLVSFLQPFS (546 aa)) the chain is on the extracellular side. N-linked (GlcNAc...) asparagine glycans are attached at residues Asn270, Asn326, Asn357, Asn409, Asn466, Asn493, and Asn513. Glycine is bound by residues 542–544 (PLT) and Arg549. The chain crosses the membrane as a helical span at residues 586-606 (NTLWILVMVSVHVVALVLYLL). The Cytoplasmic portion of the chain corresponds to 607-663 (DRFSPFGRFKLSHSDSNEEKALNLSSAVWFAWGVLLNSGIGEGTPRSFSARVLGMVW). The helical transmembrane segment at 664–684 (AGFAMIIVASYTANLAAFLVL) threads the bilayer. Over 685 to 843 (ERPKTKLSGI…KTPNTLGLKN (159 aa)) the chain is Extracellular. N-linked (GlcNAc...) asparagine glycosylation occurs at Asn705. 2 residues coordinate glycine: Ser715 and Asp759. Residues 844 to 864 (MAGVFILVGVGIAGGVGLIII) form a helical membrane-spanning segment. Residues 865–1004 (EVIYKKHQVK…YTSDVSHLVV (140 aa)) lie on the Cytoplasmic side of the membrane. Residues 980–1004 (TRPQQNILPPRYSPGYTSDVSHLVV) are disordered. Polar residues predominate over residues 994–1004 (GYTSDVSHLVV).

The protein belongs to the glutamate-gated ion channel (TC 1.A.10.1) family. As to quaternary structure, forms a heteromeric NMDA channel with Nmdar2.

It localises to the cell membrane. The protein resides in the postsynaptic cell membrane. Its subcellular location is the postsynaptic density. In terms of biological role, NMDA receptor subtype of glutamate-gated ion channels with high calcium permeability and voltage-dependent sensitivity to magnesium. Mediated by glycine. This protein plays a key role in synaptic plasticity, synaptogenesis, excitotoxicity, memory acquisition and learning. It mediates neuronal functions in glutamate neurotransmission. Is involved in the cell surface targeting of NMDA receptors. Plays a role in associative learning and in long-term memory consolidation. The polypeptide is Glutamate [NMDA] receptor subunit 1 (Drosophila persimilis (Fruit fly)).